Consider the following 366-residue polypeptide: 3-isopropylmalate dehydrogenase (366 aa).

Position 76–89 (76–89 (GPKWDANPSHLRPE)) interacts with NAD(+). Arg96, Arg106, Arg134, and Asp219 together coordinate substrate. The Mg(2+) site is built by Asp219, Asp243, and Asp247. 277 to 289 (GSAPDIAGKGIAN) contacts NAD(+).

It belongs to the isocitrate and isopropylmalate dehydrogenases family. LeuB type 1 subfamily. Homodimer. Mg(2+) serves as cofactor. It depends on Mn(2+) as a cofactor.

Its subcellular location is the cytoplasm. It catalyses the reaction (2R,3S)-3-isopropylmalate + NAD(+) = 4-methyl-2-oxopentanoate + CO2 + NADH. Its pathway is amino-acid biosynthesis; L-leucine biosynthesis; L-leucine from 3-methyl-2-oxobutanoate: step 3/4. In terms of biological role, catalyzes the oxidation of 3-carboxy-2-hydroxy-4-methylpentanoate (3-isopropylmalate) to 3-carboxy-4-methyl-2-oxopentanoate. The product decarboxylates to 4-methyl-2 oxopentanoate. This Oceanobacillus iheyensis (strain DSM 14371 / CIP 107618 / JCM 11309 / KCTC 3954 / HTE831) protein is 3-isopropylmalate dehydrogenase.